Reading from the N-terminus, the 464-residue chain is uncharacterized protein (464 aa).

The N-terminal stretch at 1-24 is a signal peptide; that stretch reads MSRFVPRIIPFYLLLLVAGGTANA.

This sequence belongs to the intimin/invasin family.

The protein localises to the periplasm. This is an uncharacterized protein from Escherichia coli (strain K12).